A 573-amino-acid chain; its full sequence is AP-4 complex accessory subunit Tepsin (573 aa).

The ENTH domain occupies 8-141 (RDRLSFLHRL…FSDAVPQPPS (134 aa)). 2 disordered regions span residues 136–155 (VPQPPSQPPQIPPPAGMGAQ) and 194–311 (NAVR…NDCQ). Residues 137–150 (PQPPSQPPQIPPPA) are compositionally biased toward pro residues. A compositionally biased stretch (polar residues) spans 217–229 (PAVTPSASHTHPN). Positions 260 to 293 (SSPSSQNSSCTSNLSRASDSGSRSGSDSHSGTSR) are enriched in low complexity. Residues 294–303 (EPGDLAERAE) show a composition bias toward basic and acidic residues. Phosphoserine is present on S400. Residues 497–526 (CSSEQGTESEQRLENTDTPEDSSSPLPWSP) form a disordered region. An interaction with AP4B1 region spans residues 526–536 (PNSLFAGMELV). The tract at residues 563 to 573 (SEPSAFAFLNM) is interaction with AP4E1.

In terms of assembly, interacts with AP4B1 and AP4E1; the interaction is direct and mediates the association of TEPSIN with the adapter-like complex 4 (AP-4), a heterotetramer composed of AP4B1, AP4E1, AP4M1 and AP4S1.

The protein localises to the golgi apparatus. Its subcellular location is the trans-Golgi network membrane. It localises to the cytoplasmic vesicle. The protein resides in the cytoplasm. It is found in the cytosol. In terms of biological role, associates with the adapter-like complex 4 (AP-4) and may therefore play a role in vesicular trafficking of proteins at the trans-Golgi network. This Mus musculus (Mouse) protein is AP-4 complex accessory subunit Tepsin.